Consider the following 642-residue polypeptide: Threonine--tRNA ligase (642 aa).

Residues 1–61 (MPVITLPDGS…ETDAELSIIT (61 aa)) form the TGS domain. Residues 243 to 534 (DHRKIGKQLD…LIEEYAGRFP (292 aa)) are catalytic. Zn(2+)-binding residues include Cys334, His385, and His511.

This sequence belongs to the class-II aminoacyl-tRNA synthetase family. As to quaternary structure, homodimer. The cofactor is Zn(2+).

It is found in the cytoplasm. The catalysed reaction is tRNA(Thr) + L-threonine + ATP = L-threonyl-tRNA(Thr) + AMP + diphosphate + H(+). Catalyzes the attachment of threonine to tRNA(Thr) in a two-step reaction: L-threonine is first activated by ATP to form Thr-AMP and then transferred to the acceptor end of tRNA(Thr). Also edits incorrectly charged L-seryl-tRNA(Thr). This is Threonine--tRNA ligase from Shewanella oneidensis (strain ATCC 700550 / JCM 31522 / CIP 106686 / LMG 19005 / NCIMB 14063 / MR-1).